Reading from the N-terminus, the 739-residue chain is Phosphoribosylformylglycinamidine synthase subunit PurL (739 aa).

His49 is a catalytic residue. 2 residues coordinate ATP: Tyr52 and Lys91. Mg(2+) is bound at residue Glu93. Substrate-binding positions include 94-97 and Arg116; that span reads SHNH. His95 acts as the Proton acceptor in catalysis. Asp117 is a Mg(2+) binding site. Residue Gln240 coordinates substrate. Asp268 is a binding site for Mg(2+). Residue 312–314 participates in substrate binding; that stretch reads ESQ. Residues Asp493 and Gly530 each contribute to the ATP site. Asn531 contributes to the Mg(2+) binding site. A substrate-binding site is contributed by Ser533.

The protein belongs to the FGAMS family. Monomer. Part of the FGAM synthase complex composed of 1 PurL, 1 PurQ and 2 PurS subunits.

The protein localises to the cytoplasm. It catalyses the reaction N(2)-formyl-N(1)-(5-phospho-beta-D-ribosyl)glycinamide + L-glutamine + ATP + H2O = 2-formamido-N(1)-(5-O-phospho-beta-D-ribosyl)acetamidine + L-glutamate + ADP + phosphate + H(+). The protein operates within purine metabolism; IMP biosynthesis via de novo pathway; 5-amino-1-(5-phospho-D-ribosyl)imidazole from N(2)-formyl-N(1)-(5-phospho-D-ribosyl)glycinamide: step 1/2. Part of the phosphoribosylformylglycinamidine synthase complex involved in the purines biosynthetic pathway. Catalyzes the ATP-dependent conversion of formylglycinamide ribonucleotide (FGAR) and glutamine to yield formylglycinamidine ribonucleotide (FGAM) and glutamate. The FGAM synthase complex is composed of three subunits. PurQ produces an ammonia molecule by converting glutamine to glutamate. PurL transfers the ammonia molecule to FGAR to form FGAM in an ATP-dependent manner. PurS interacts with PurQ and PurL and is thought to assist in the transfer of the ammonia molecule from PurQ to PurL. In Parvibaculum lavamentivorans (strain DS-1 / DSM 13023 / NCIMB 13966), this protein is Phosphoribosylformylglycinamidine synthase subunit PurL.